The following is a 93-amino-acid chain: Putative regulatory protein LA_2599 (93 aa).

The protein belongs to the RemA family.

The protein is Putative regulatory protein LA_2599 of Leptospira interrogans serogroup Icterohaemorrhagiae serovar Lai (strain 56601).